The primary structure comprises 105 residues: Small ribosomal subunit protein uS10c (105 aa).

Belongs to the universal ribosomal protein uS10 family. In terms of assembly, part of the 30S ribosomal subunit.

It localises to the plastid. It is found in the cyanelle. In terms of biological role, involved in the binding of tRNA to the ribosomes. The chain is Small ribosomal subunit protein uS10c (rps10) from Cyanophora paradoxa.